The primary structure comprises 156 residues: Ribosomal RNA large subunit methyltransferase H (156 aa).

S-adenosyl-L-methionine contacts are provided by residues leucine 73, glycine 104, and 123–128; that span reads LSPLTL.

Belongs to the RNA methyltransferase RlmH family. In terms of assembly, homodimer.

It is found in the cytoplasm. The catalysed reaction is pseudouridine(1915) in 23S rRNA + S-adenosyl-L-methionine = N(3)-methylpseudouridine(1915) in 23S rRNA + S-adenosyl-L-homocysteine + H(+). Specifically methylates the pseudouridine at position 1915 (m3Psi1915) in 23S rRNA. The protein is Ribosomal RNA large subunit methyltransferase H of Yersinia enterocolitica serotype O:8 / biotype 1B (strain NCTC 13174 / 8081).